The following is a 266-amino-acid chain: Putative peptidyl-prolyl cis-trans isomerase NifM (266 aa).

The PpiC domain occupies 124-221 (PEQRLTRHLL…LGWHLLWCEA (98 aa)).

This sequence belongs to the PpiC/parvulin rotamase family.

It catalyses the reaction [protein]-peptidylproline (omega=180) = [protein]-peptidylproline (omega=0). In terms of biological role, required for the activation and stabilization of the iron-component (NifH) of nitrogenase. Probable PPIase. The protein is Putative peptidyl-prolyl cis-trans isomerase NifM (nifM) of Klebsiella oxytoca.